A 546-amino-acid chain; its full sequence is CTP synthase (546 aa).

An amidoligase domain region spans residues 1–266 (MTTRYIFVTG…DQLVTKRFGI (266 aa)). CTP is bound at residue serine 14. UTP is bound at residue serine 14. ATP contacts are provided by residues 15-20 (SLGKGI) and aspartate 72. Mg(2+)-binding residues include aspartate 72 and glutamate 140. CTP contacts are provided by residues 147-149 (DIE), 187-192 (KTKPTQ), and lysine 223. Residues 187 to 192 (KTKPTQ) and lysine 223 each bind UTP. An ATP-binding site is contributed by 239–241 (KDV). Positions 291–542 (TIGMVGKYIE…VAAAYTYQKR (252 aa)) constitute a Glutamine amidotransferase type-1 domain. Residue glycine 352 participates in L-glutamine binding. Residue cysteine 379 is the Nucleophile; for glutamine hydrolysis of the active site. L-glutamine-binding positions include 380 to 383 (LGMQ), glutamate 403, and arginine 470. Residues histidine 515 and glutamate 517 contribute to the active site.

It belongs to the CTP synthase family. As to quaternary structure, homotetramer.

It catalyses the reaction UTP + L-glutamine + ATP + H2O = CTP + L-glutamate + ADP + phosphate + 2 H(+). The enzyme catalyses L-glutamine + H2O = L-glutamate + NH4(+). It carries out the reaction UTP + NH4(+) + ATP = CTP + ADP + phosphate + 2 H(+). It participates in pyrimidine metabolism; CTP biosynthesis via de novo pathway; CTP from UDP: step 2/2. Allosterically activated by GTP, when glutamine is the substrate; GTP has no effect on the reaction when ammonia is the substrate. The allosteric effector GTP functions by stabilizing the protein conformation that binds the tetrahedral intermediate(s) formed during glutamine hydrolysis. Inhibited by the product CTP, via allosteric rather than competitive inhibition. Functionally, catalyzes the ATP-dependent amination of UTP to CTP with either L-glutamine or ammonia as the source of nitrogen. Regulates intracellular CTP levels through interactions with the four ribonucleotide triphosphates. In Shewanella halifaxensis (strain HAW-EB4), this protein is CTP synthase.